We begin with the raw amino-acid sequence, 101 residues long: NAD(P)H-quinone oxidoreductase subunit 4L, chloroplastic (101 aa).

A run of 3 helical transmembrane segments spans residues 2–22 (MLEH…YGLI), 32–52 (MCLE…SDFF), and 61–81 (IFSI…LAIV).

The protein belongs to the complex I subunit 4L family. In terms of assembly, NDH is composed of at least 16 different subunits, 5 of which are encoded in the nucleus.

It is found in the plastid. The protein resides in the chloroplast thylakoid membrane. It carries out the reaction a plastoquinone + NADH + (n+1) H(+)(in) = a plastoquinol + NAD(+) + n H(+)(out). The catalysed reaction is a plastoquinone + NADPH + (n+1) H(+)(in) = a plastoquinol + NADP(+) + n H(+)(out). Functionally, NDH shuttles electrons from NAD(P)H:plastoquinone, via FMN and iron-sulfur (Fe-S) centers, to quinones in the photosynthetic chain and possibly in a chloroplast respiratory chain. The immediate electron acceptor for the enzyme in this species is believed to be plastoquinone. Couples the redox reaction to proton translocation, and thus conserves the redox energy in a proton gradient. The polypeptide is NAD(P)H-quinone oxidoreductase subunit 4L, chloroplastic (Daucus carota (Wild carrot)).